Here is a 335-residue protein sequence, read N- to C-terminus: Pregnancy-specific beta-1-glycoprotein 11 (335 aa).

The signal sequence occupies residues 1-34; that stretch reads MGPLSAPPCTEHIKWKGLLLTALLLNFWNLPTTA. The Ig-like V-type domain maps to 35-144; it reads QVMIEAQPPK…TGYFTFTLYL (110 aa). 3 N-linked (GlcNAc...) asparagine glycosylation sites follow: N61, N104, and N111. Positions 127–129 match the Cell attachment site motif; the sequence is RGD. Ig-like C2-type domains follow at residues 147-234 and 242-317; these read PKPS…VTLN and PRIF…TSLT. Disulfide bonds link C169–C217 and C261–C301.

The protein belongs to the immunoglobulin superfamily. CEA family.

It is found in the secreted. This chain is Pregnancy-specific beta-1-glycoprotein 11 (PSG11), found in Homo sapiens (Human).